The chain runs to 541 residues: uncharacterized protein (541 aa).

An N-terminal signal peptide occupies residues 1-17; that stretch reads MSFSATILFSPPSGSEA. 2 disordered regions span residues 28 to 47 and 103 to 138; these read TSQGSTGSQGGNPPASTPIT and GKVCTADEDRESRARTPPPEEPGVLKGSPGEASNSL. Basic and acidic residues predominate over residues 103-116; the sequence is GKVCTADEDRESRA. Thr118 is subject to Phosphothreonine. Residues Lys128 and Lys223 each participate in a glycyl lysine isopeptide (Lys-Gly) (interchain with G-Cter in SUMO2) cross-link. Ser226 is modified (phosphoserine). Positions 232-243 are enriched in polar residues; that stretch reads AIQRASSETGPE. A disordered region spans residues 232-254; it reads AIQRASSETGPESGTKLPATRPE. Phosphoserine is present on residues Ser286 and Ser429. The tract at residues 494–526 is disordered; it reads YNPNFQEDEGGGNEKGPVSPSYDQPHKTSCPDL.

The protein resides in the secreted. This is an uncharacterized protein from Mus musculus (Mouse).